The following is a 92-amino-acid chain: UPF0223 protein SGO_1052 (92 aa).

This sequence belongs to the UPF0223 family.

This Streptococcus gordonii (strain Challis / ATCC 35105 / BCRC 15272 / CH1 / DL1 / V288) protein is UPF0223 protein SGO_1052.